The chain runs to 747 residues: Catalase-peroxidase 1 (747 aa).

Over residues methionine 1–serine 22 the composition is skewed to basic and acidic residues. Residues methionine 1 to threonine 39 form a disordered region. Positions tryptophan 112–tyrosine 240 form a cross-link, tryptophyl-tyrosyl-methioninium (Trp-Tyr) (with M-266). The active-site Proton acceptor is the histidine 113. The segment at residues tyrosine 240–methionine 266 is a cross-link (tryptophyl-tyrosyl-methioninium (Tyr-Met) (with W-112)). Residue histidine 281 coordinates heme b.

This sequence belongs to the peroxidase family. Peroxidase/catalase subfamily. In terms of assembly, homodimer or homotetramer. Heme b serves as cofactor. In terms of processing, formation of the three residue Trp-Tyr-Met cross-link is important for the catalase, but not the peroxidase activity of the enzyme.

It carries out the reaction H2O2 + AH2 = A + 2 H2O. It catalyses the reaction 2 H2O2 = O2 + 2 H2O. Bifunctional enzyme with both catalase and broad-spectrum peroxidase activity. This chain is Catalase-peroxidase 1, found in Mycolicibacterium vanbaalenii (strain DSM 7251 / JCM 13017 / BCRC 16820 / KCTC 9966 / NRRL B-24157 / PYR-1) (Mycobacterium vanbaalenii).